A 443-amino-acid chain; its full sequence is Ribosomal protein uS12 methylthiotransferase RimO (443 aa).

The MTTase N-terminal domain maps to 11 to 121; it reads PTVGFVSLGC…VMEAVHGALP (111 aa). Cys-20, Cys-56, Cys-85, Cys-152, Cys-156, and Cys-159 together coordinate [4Fe-4S] cluster. Residues 138–375 enclose the Radical SAM core domain; it reads LTPRHYAYLK…METQAEISAA (238 aa). The region spanning 378–443 is the TRAM domain; that stretch reads DAKIGRTIEV…DAHDLWATPV (66 aa).

The protein belongs to the methylthiotransferase family. RimO subfamily. [4Fe-4S] cluster is required as a cofactor.

It is found in the cytoplasm. The catalysed reaction is L-aspartate(89)-[ribosomal protein uS12]-hydrogen + (sulfur carrier)-SH + AH2 + 2 S-adenosyl-L-methionine = 3-methylsulfanyl-L-aspartate(89)-[ribosomal protein uS12]-hydrogen + (sulfur carrier)-H + 5'-deoxyadenosine + L-methionine + A + S-adenosyl-L-homocysteine + 2 H(+). In terms of biological role, catalyzes the methylthiolation of an aspartic acid residue of ribosomal protein uS12. This chain is Ribosomal protein uS12 methylthiotransferase RimO, found in Thiobacillus denitrificans (strain ATCC 25259 / T1).